We begin with the raw amino-acid sequence, 513 residues long: ATP synthase subunit alpha (513 aa).

Gly-169 to Thr-176 provides a ligand contact to ATP.

This sequence belongs to the ATPase alpha/beta chains family. F-type ATPases have 2 components, CF(1) - the catalytic core - and CF(0) - the membrane proton channel. CF(1) has five subunits: alpha(3), beta(3), gamma(1), delta(1), epsilon(1). CF(0) has three main subunits: a(1), b(2) and c(9-12). The alpha and beta chains form an alternating ring which encloses part of the gamma chain. CF(1) is attached to CF(0) by a central stalk formed by the gamma and epsilon chains, while a peripheral stalk is formed by the delta and b chains.

It is found in the cell inner membrane. It carries out the reaction ATP + H2O + 4 H(+)(in) = ADP + phosphate + 5 H(+)(out). Functionally, produces ATP from ADP in the presence of a proton gradient across the membrane. The alpha chain is a regulatory subunit. This Histophilus somni (strain 2336) (Haemophilus somnus) protein is ATP synthase subunit alpha.